The sequence spans 189 residues: Inner membrane-spanning protein YciB (189 aa).

The next 5 helical transmembrane spans lie at 4–24 (FFEF…DIYI), 53–73 (ITFG…DDVF), 76–96 (WKVT…QFFY), 121–141 (MAWA…AFSL), and 149–169 (FKVF…GLYI).

The protein belongs to the YciB family.

The protein resides in the cell inner membrane. Functionally, plays a role in cell envelope biogenesis, maintenance of cell envelope integrity and membrane homeostasis. The chain is Inner membrane-spanning protein YciB from Psychromonas ingrahamii (strain DSM 17664 / CCUG 51855 / 37).